The following is an 847-amino-acid chain: Protein translocase subunit SecA (847 aa).

Residues glutamine 87, 105 to 109 (GEGKT), and aspartate 495 contribute to the ATP site. Residues 828-847 (SSNSPSDARNRPIEHDDNAV) are disordered. A compositionally biased stretch (basic and acidic residues) spans 835–847 (ARNRPIEHDDNAV).

The protein belongs to the SecA family. In terms of assembly, monomer and homodimer. Part of the essential Sec protein translocation apparatus which comprises SecA, SecYEG and auxiliary proteins SecDF. Other proteins may also be involved.

The protein resides in the cell membrane. It localises to the cytoplasm. The enzyme catalyses ATP + H2O + cellular proteinSide 1 = ADP + phosphate + cellular proteinSide 2.. Its function is as follows. Part of the Sec protein translocase complex. Interacts with the SecYEG preprotein conducting channel. Has a central role in coupling the hydrolysis of ATP to the transfer of proteins into and across the cell membrane, serving as an ATP-driven molecular motor driving the stepwise translocation of polypeptide chains across the membrane. In Tropheryma whipplei (strain TW08/27) (Whipple's bacillus), this protein is Protein translocase subunit SecA.